A 181-amino-acid polypeptide reads, in one-letter code: Adenine phosphoribosyltransferase (181 aa).

The protein belongs to the purine/pyrimidine phosphoribosyltransferase family. As to quaternary structure, homodimer.

It is found in the cytoplasm. It carries out the reaction AMP + diphosphate = 5-phospho-alpha-D-ribose 1-diphosphate + adenine. It functions in the pathway purine metabolism; AMP biosynthesis via salvage pathway; AMP from adenine: step 1/1. Functionally, catalyzes a salvage reaction resulting in the formation of AMP, that is energically less costly than de novo synthesis. In Chromohalobacter salexigens (strain ATCC BAA-138 / DSM 3043 / CIP 106854 / NCIMB 13768 / 1H11), this protein is Adenine phosphoribosyltransferase.